A 620-amino-acid chain; its full sequence is Toxin coregulated pilus biosynthesis protein I (620 aa).

The 237-residue stretch at 344 to 580 (TMNDLSIKQT…DVAKQMEDIR (237 aa)) folds into the Methyl-accepting transducer domain.

Belongs to the methyl-accepting chemotaxis (MCP) protein family.

The protein localises to the cell inner membrane. Functionally, may function as an environmental regulator of TCP biogenesis. Negatively regulates the synthesis of the major pilin subunit of TCP (TcpA). This is Toxin coregulated pilus biosynthesis protein I (tcpI) from Vibrio cholerae serotype O1 (strain ATCC 39541 / Classical Ogawa 395 / O395).